The following is a 195-amino-acid chain: Peptidyl-tRNA hydrolase (195 aa).

Tyrosine 17 lines the tRNA pocket. The Proton acceptor role is filled by histidine 22. TRNA is bound by residues tyrosine 68, asparagine 70, and asparagine 116.

It belongs to the PTH family. Monomer.

Its subcellular location is the cytoplasm. It catalyses the reaction an N-acyl-L-alpha-aminoacyl-tRNA + H2O = an N-acyl-L-amino acid + a tRNA + H(+). Its function is as follows. Hydrolyzes ribosome-free peptidyl-tRNAs (with 1 or more amino acids incorporated), which drop off the ribosome during protein synthesis, or as a result of ribosome stalling. Catalyzes the release of premature peptidyl moieties from peptidyl-tRNA molecules trapped in stalled 50S ribosomal subunits, and thus maintains levels of free tRNAs and 50S ribosomes. In Shewanella sp. (strain ANA-3), this protein is Peptidyl-tRNA hydrolase.